The primary structure comprises 288 residues: Alpha/beta hydrolase domain-containing protein 17B (288 aa).

Residues Ser170, Asp235, and His264 each act as charge relay system in the active site. Phosphoserine is present on Ser282.

The protein belongs to the AB hydrolase superfamily. ABHD17 family. Post-translationally, palmitoylated on cysteine residues located in a cysteine cluster at the N-terminus which promotes membrane localization. Palmitoylation is required for post-synaptic localization and for depalmitoylating activity towards DLG4/PSD95. As to expression, expressed in brain.

Its subcellular location is the cell membrane. The protein localises to the recycling endosome membrane. The protein resides in the cell projection. It is found in the dendritic spine. It localises to the postsynaptic density membrane. It catalyses the reaction S-hexadecanoyl-L-cysteinyl-[protein] + H2O = L-cysteinyl-[protein] + hexadecanoate + H(+). Functionally, hydrolyzes fatty acids from S-acylated cysteine residues in proteins. Has depalmitoylating activity towards DLG4/PSD95. Has depalmitoylating activity towards GAP43. Has depalmitoylating activity towards MAP6. Has depalmitoylating activity towards NRAS. The chain is Alpha/beta hydrolase domain-containing protein 17B from Mus musculus (Mouse).